Reading from the N-terminus, the 399-residue chain is MAPFVEVCRYKPLPLSLSSLCTCPCRSSPRKYLILPQFSEKYPKPLLSHSRFTPISVNRRVITAVARAESNQIGDDANSKEEHNIDQELQNVEEDSSLDDQKQKSRSQFKKRVTFGLGIGLSVGGIVLAGGWVFTVAVAAAVLLSAREYFELVRSKGIAQGMTPPPRYLSRVCSIICALMPILTLYFGHIDISITSAAFVVAMALLLQRGNPRFSQLSSTMFGLFYCGYLPCFWVKLRCGLTAPVLNTGIGRSWPTILGGQAHWTVGLVAILISFCGIIASDTFAFLGGKAFGRTPLISISPKKTWEGAFAGLVGCISITILLSKSLSWPQSLVSTIAFGVLNFFGSVFGDLTESMIKRDAGVKDSGSLIPGHGGILDRVDSYIFTGALAYSFVRLHGV.

Residues 1–26 (MAPFVEVCRYKPLPLSLSSLCTCPCR) constitute a chloroplast transit peptide. 6 consecutive transmembrane segments (helical) span residues 123-143 (VGGI…AAVL), 187-207 (FGHI…ALLL), 217-237 (LSST…WVKL), 266-286 (VGLV…TFAF), 309-329 (AFAG…SLSW), and 333-353 (LVST…GDLT).

Belongs to the CDS family. The cofactor is Mg(2+).

Its subcellular location is the plastid. It localises to the chloroplast membrane. The enzyme catalyses a 1,2-diacyl-sn-glycero-3-phosphate + CTP + H(+) = a CDP-1,2-diacyl-sn-glycerol + diphosphate. Its pathway is phospholipid metabolism; CDP-diacylglycerol biosynthesis; CDP-diacylglycerol from sn-glycerol 3-phosphate: step 3/3. With respect to regulation, highest activities is obtained at about 30 mM CTP and 2 mM phosphatidic acid (PA). In terms of biological role, may be involved in the synthesis of minor phospholipids and in modulation of IP3-mediated signal transduction. Promotes the biosynthesis of plastidial phosphatidylglycerol (PG) which is required for structure and function of thylakoid membranes and, hence, for photoautotrophic growth. The sequence is that of Phosphatidate cytidylyltransferase 5, chloroplastic from Arabidopsis thaliana (Mouse-ear cress).